A 303-amino-acid polypeptide reads, in one-letter code: Phosphate import ATP-binding protein PstB (303 aa).

Residues 56–298 enclose the ABC transporter domain; the sequence is LSTSDVHVYY…PDHQLTEAYI (243 aa). 88–95 contributes to the ATP binding site; that stretch reads GPSGCGKS.

Belongs to the ABC transporter superfamily. Phosphate importer (TC 3.A.1.7) family. As to quaternary structure, the complex is composed of two ATP-binding proteins (PstB), two transmembrane proteins (PstC and PstA) and a solute-binding protein (PstS).

It localises to the cell inner membrane. The catalysed reaction is phosphate(out) + ATP + H2O = ADP + 2 phosphate(in) + H(+). Functionally, part of the ABC transporter complex PstSACB involved in phosphate import. Responsible for energy coupling to the transport system. The sequence is that of Phosphate import ATP-binding protein PstB from Acinetobacter baylyi (strain ATCC 33305 / BD413 / ADP1).